Consider the following 550-residue polypeptide: Pectinesterase 2.1 (550 aa).

Residue N179 is glycosylated (N-linked (GlcNAc...) asparagine). Residues T312 and Q342 each coordinate substrate. A disulfide bridge links C331 with C358. The Proton donor role is filled by D365. Catalysis depends on D386, which acts as the Nucleophile. A disulfide bridge connects residues C399 and C433. R454 and W456 together coordinate substrate.

It in the N-terminal section; belongs to the PMEI family. The protein in the C-terminal section; belongs to the pectinesterase family.

It is found in the secreted. It localises to the cell wall. The catalysed reaction is [(1-&gt;4)-alpha-D-galacturonosyl methyl ester](n) + n H2O = [(1-&gt;4)-alpha-D-galacturonosyl](n) + n methanol + n H(+). Its pathway is glycan metabolism; pectin degradation; 2-dehydro-3-deoxy-D-gluconate from pectin: step 1/5. Functionally, pectinesterase may play a role in cell wall metabolism during fruit growth and development prior to ripening and may be required for preparing cell walls for softening by polygalacturonase during fruit ripening. This is Pectinesterase 2.1 (PME2.1) from Solanum lycopersicum (Tomato).